The primary structure comprises 452 residues: Proline--tRNA ligase (452 aa).

This sequence belongs to the class-II aminoacyl-tRNA synthetase family. ProS type 2 subfamily. As to quaternary structure, homodimer.

The protein resides in the cytoplasm. It catalyses the reaction tRNA(Pro) + L-proline + ATP = L-prolyl-tRNA(Pro) + AMP + diphosphate. Its function is as follows. Catalyzes the attachment of proline to tRNA(Pro) in a two-step reaction: proline is first activated by ATP to form Pro-AMP and then transferred to the acceptor end of tRNA(Pro). This Jannaschia sp. (strain CCS1) protein is Proline--tRNA ligase.